Here is a 307-residue protein sequence, read N- to C-terminus: Coenzyme PQQ synthesis protein B (307 aa).

Belongs to the PqqB family.

It participates in cofactor biosynthesis; pyrroloquinoline quinone biosynthesis. In terms of biological role, may be involved in the transport of PQQ or its precursor to the periplasm. The protein is Coenzyme PQQ synthesis protein B of Gluconacetobacter diazotrophicus (strain ATCC 49037 / DSM 5601 / CCUG 37298 / CIP 103539 / LMG 7603 / PAl5).